The following is a 419-amino-acid chain: Gamma-glutamyl phosphate reductase (419 aa).

Belongs to the gamma-glutamyl phosphate reductase family.

The protein resides in the cytoplasm. The catalysed reaction is L-glutamate 5-semialdehyde + phosphate + NADP(+) = L-glutamyl 5-phosphate + NADPH + H(+). It participates in amino-acid biosynthesis; L-proline biosynthesis; L-glutamate 5-semialdehyde from L-glutamate: step 2/2. Functionally, catalyzes the NADPH-dependent reduction of L-glutamate 5-phosphate into L-glutamate 5-semialdehyde and phosphate. The product spontaneously undergoes cyclization to form 1-pyrroline-5-carboxylate. The protein is Gamma-glutamyl phosphate reductase of Marinomonas sp. (strain MWYL1).